A 204-amino-acid polypeptide reads, in one-letter code: Phosphatidylserine decarboxylase proenzyme (204 aa).

The Schiff-base intermediate with substrate; via pyruvic acid role is filled by S169. S169 bears the Pyruvic acid (Ser); by autocatalysis mark.

This sequence belongs to the phosphatidylserine decarboxylase family. PSD-A subfamily. Heterodimer of a large membrane-associated beta subunit and a small pyruvoyl-containing alpha subunit. Pyruvate is required as a cofactor. In terms of processing, is synthesized initially as an inactive proenzyme. Formation of the active enzyme involves a self-maturation process in which the active site pyruvoyl group is generated from an internal serine residue via an autocatalytic post-translational modification. Two non-identical subunits are generated from the proenzyme in this reaction, and the pyruvate is formed at the N-terminus of the alpha chain, which is derived from the carboxyl end of the proenzyme. The post-translation cleavage follows an unusual pathway, termed non-hydrolytic serinolysis, in which the side chain hydroxyl group of the serine supplies its oxygen atom to form the C-terminus of the beta chain, while the remainder of the serine residue undergoes an oxidative deamination to produce ammonia and the pyruvoyl prosthetic group on the alpha chain.

It localises to the cell membrane. The catalysed reaction is a 1,2-diacyl-sn-glycero-3-phospho-L-serine + H(+) = a 1,2-diacyl-sn-glycero-3-phosphoethanolamine + CO2. It participates in phospholipid metabolism; phosphatidylethanolamine biosynthesis; phosphatidylethanolamine from CDP-diacylglycerol: step 2/2. Its function is as follows. Catalyzes the formation of phosphatidylethanolamine (PtdEtn) from phosphatidylserine (PtdSer). The polypeptide is Phosphatidylserine decarboxylase proenzyme (Solibacter usitatus (strain Ellin6076)).